A 337-amino-acid polypeptide reads, in one-letter code: Eukaryotic translation initiation factor 3 subunit H (337 aa).

In terms of domain architecture, MPN spans 21-153; it reads VQCDGLAVMK…LKAYRLTPQA (133 aa).

Belongs to the eIF-3 subunit H family. Component of the eukaryotic translation initiation factor 3 (eIF-3) complex. The eIF-3 complex interacts with pix. Interacts with mxt.

The protein resides in the cytoplasm. Functionally, component of the eukaryotic translation initiation factor 3 (eIF-3) complex, which is involved in protein synthesis of a specialized repertoire of mRNAs and, together with other initiation factors, stimulates binding of mRNA and methionyl-tRNAi to the 40S ribosome. The eIF-3 complex specifically targets and initiates translation of a subset of mRNAs involved in cell proliferation. The protein is Eukaryotic translation initiation factor 3 subunit H of Drosophila willistoni (Fruit fly).